A 125-amino-acid chain; its full sequence is UPF0225 protein Cgl1438/cg1626 (125 aa).

The protein belongs to the UPF0225 family.

The protein is UPF0225 protein Cgl1438/cg1626 of Corynebacterium glutamicum (strain ATCC 13032 / DSM 20300 / JCM 1318 / BCRC 11384 / CCUG 27702 / LMG 3730 / NBRC 12168 / NCIMB 10025 / NRRL B-2784 / 534).